A 236-amino-acid polypeptide reads, in one-letter code: Large ribosomal subunit protein uL2 (236 aa).

The span at 1-10 (MGHRITTQSR) shows a compositional bias: polar residues. Disordered regions lie at residues 1–20 (MGHRITTQSRGHGGPTYRAP) and 202–236 (GGGGHQHAGRPKTVSRGTSPGRKVGHIAARRTGRR). The span at 224-236 (KVGHIAARRTGRR) shows a compositional bias: basic residues.

Belongs to the universal ribosomal protein uL2 family. In terms of assembly, part of the 50S ribosomal subunit. Forms a bridge to the 30S subunit in the 70S ribosome.

One of the primary rRNA binding proteins. Required for association of the 30S and 50S subunits to form the 70S ribosome, for tRNA binding and peptide bond formation. It has been suggested to have peptidyltransferase activity; this is somewhat controversial. Makes several contacts with the 16S rRNA in the 70S ribosome. The chain is Large ribosomal subunit protein uL2 from Methanospirillum hungatei JF-1 (strain ATCC 27890 / DSM 864 / NBRC 100397 / JF-1).